Consider the following 470-residue polypeptide: Ribulose bisphosphate carboxylase large chain (470 aa).

Residue Lys5 is modified to N6,N6,N6-trimethyllysine. Asn114 and Thr164 together coordinate substrate. Lys166 (proton acceptor) is an active-site residue. A substrate-binding site is contributed by Lys168. Mg(2+) is bound by residues Lys192, Asp194, and Glu195. N6-carboxylysine is present on Lys192. His285 functions as the Proton acceptor in the catalytic mechanism. 3 residues coordinate substrate: Arg286, His318, and Ser370.

Belongs to the RuBisCO large chain family. Type I subfamily. As to quaternary structure, heterohexadecamer of 8 large chains and 8 small chains; disulfide-linked. The disulfide link is formed within the large subunit homodimers. Mg(2+) is required as a cofactor. The disulfide bond which can form in the large chain dimeric partners within the hexadecamer appears to be associated with oxidative stress and protein turnover.

The protein localises to the plastid. Its subcellular location is the chloroplast. The catalysed reaction is 2 (2R)-3-phosphoglycerate + 2 H(+) = D-ribulose 1,5-bisphosphate + CO2 + H2O. The enzyme catalyses D-ribulose 1,5-bisphosphate + O2 = 2-phosphoglycolate + (2R)-3-phosphoglycerate + 2 H(+). In terms of biological role, ruBisCO catalyzes two reactions: the carboxylation of D-ribulose 1,5-bisphosphate, the primary event in carbon dioxide fixation, as well as the oxidative fragmentation of the pentose substrate in the photorespiration process. Both reactions occur simultaneously and in competition at the same active site. The protein is Ribulose bisphosphate carboxylase large chain of Bertiera breviflora.